Reading from the N-terminus, the 449-residue chain is UDP-N-acetylmuramoylalanine--D-glutamate ligase (449 aa).

113 to 119 (GTNGKTT) serves as a coordination point for ATP.

Belongs to the MurCDEF family.

It localises to the cytoplasm. It carries out the reaction UDP-N-acetyl-alpha-D-muramoyl-L-alanine + D-glutamate + ATP = UDP-N-acetyl-alpha-D-muramoyl-L-alanyl-D-glutamate + ADP + phosphate + H(+). The protein operates within cell wall biogenesis; peptidoglycan biosynthesis. In terms of biological role, cell wall formation. Catalyzes the addition of glutamate to the nucleotide precursor UDP-N-acetylmuramoyl-L-alanine (UMA). This Gloeothece citriformis (strain PCC 7424) (Cyanothece sp. (strain PCC 7424)) protein is UDP-N-acetylmuramoylalanine--D-glutamate ligase.